Here is a 472-residue protein sequence, read N- to C-terminus: GTPase Der (472 aa).

EngA-type G domains lie at 3–166 (PIIA…IQNN) and 188–361 (IKLA…HCST). Residues 9-16 (GRPNVGKS), 56-60 (DTGGI), 118-121 (NKID), 194-201 (GSSNVGKS), 241-245 (DTAGL), and 306-309 (NKWD) contribute to the GTP site. The KH-like domain maps to 362 to 446 (KRISTALLTK…PIRIQFNEPA (85 aa)).

The protein belongs to the TRAFAC class TrmE-Era-EngA-EngB-Septin-like GTPase superfamily. EngA (Der) GTPase family. As to quaternary structure, associates with the 50S ribosomal subunit.

In terms of biological role, GTPase that plays an essential role in the late steps of ribosome biogenesis. This Baumannia cicadellinicola subsp. Homalodisca coagulata protein is GTPase Der.